The chain runs to 453 residues: SH2 domain-containing protein 4A (453 aa).

Residues 96–127 (EIIAEQARREAEKEAEQLRKKQEVELSQLSTL) adopt a coiled-coil conformation. The tract at residues 280–301 (AVKRPPIPPKPKLPPSANNSSI) is disordered. Residues 284 to 293 (PPIPPKPKLP) are compositionally biased toward pro residues. The 93-residue stretch at 347-439 (WFHGIISRQE…LGRELLRFPC (93 aa)) folds into the SH2 domain.

The protein localises to the cytoplasm. Its function is as follows. Inhibits estrogen-induced cell proliferation. The chain is SH2 domain-containing protein 4A (sh2d4a) from Xenopus tropicalis (Western clawed frog).